Consider the following 507-residue polypeptide: L-threonine dehydratase biosynthetic IlvA (507 aa).

Lys-52 is modified (N6-(pyridoxal phosphate)lysine). Residues Asn-79, 182–186 (GGGGL), and Ser-309 contribute to the pyridoxal 5'-phosphate site. ACT-like domains follow at residues 333-404 (AVFA…DLTH) and 427-498 (RLFR…EESA).

It belongs to the serine/threonine dehydratase family. Homotetramer. Pyridoxal 5'-phosphate serves as cofactor.

The catalysed reaction is L-threonine = 2-oxobutanoate + NH4(+). It participates in amino-acid biosynthesis; L-isoleucine biosynthesis; 2-oxobutanoate from L-threonine: step 1/1. In terms of biological role, catalyzes the anaerobic formation of alpha-ketobutyrate and ammonia from threonine in a two-step reaction. The first step involved a dehydration of threonine and a production of enamine intermediates (aminocrotonate), which tautomerizes to its imine form (iminobutyrate). Both intermediates are unstable and short-lived. The second step is the nonenzymatic hydrolysis of the enamine/imine intermediates to form 2-ketobutyrate and free ammonia. In the low water environment of the cell, the second step is accelerated by RidA. The sequence is that of L-threonine dehydratase biosynthetic IlvA (ilvA) from Burkholderia multivorans (strain ATCC 17616 / 249).